Here is a 456-residue protein sequence, read N- to C-terminus: Cysteine--tRNA ligase (456 aa).

Cys30 lines the Zn(2+) pocket. The short motif at 32 to 42 (MTVYDFCHIGH) is the 'HIGH' region element. The Zn(2+) site is built by Cys211, His236, and Glu240. Positions 268 to 272 (KMSKS) match the 'KMSKS' region motif. Lys271 serves as a coordination point for ATP.

It belongs to the class-I aminoacyl-tRNA synthetase family. Monomer. It depends on Zn(2+) as a cofactor.

The protein resides in the cytoplasm. It carries out the reaction tRNA(Cys) + L-cysteine + ATP = L-cysteinyl-tRNA(Cys) + AMP + diphosphate. The sequence is that of Cysteine--tRNA ligase from Dichelobacter nodosus (strain VCS1703A).